A 331-amino-acid chain; its full sequence is 6-phosphogluconolactonase (331 aa).

The residue at position 287 (lysine 287) is an N6-acetyllysine.

The protein belongs to the cycloisomerase 2 family.

It catalyses the reaction 6-phospho-D-glucono-1,5-lactone + H2O = 6-phospho-D-gluconate + H(+). It participates in carbohydrate degradation; pentose phosphate pathway; D-ribulose 5-phosphate from D-glucose 6-phosphate (oxidative stage): step 2/3. Catalyzes the hydrolysis of 6-phosphogluconolactone to 6-phosphogluconate. The chain is 6-phosphogluconolactonase from Escherichia coli (strain SMS-3-5 / SECEC).